A 402-amino-acid chain; its full sequence is Zinc finger protein 322 (402 aa).

The C2H2-type 1; atypical zinc finger occupies 43 to 65 (YQCLECKQNFCENLALIMCERTH). 8 consecutive C2H2-type zinc fingers follow at residues 71-93 (YKCD…QRIH), 99-121 (YKCS…QRTH), 127-149 (YTCD…QRSH), 155-177 (YLCS…RRTH), 183-205 (FKCL…QRTH), 211-233 (YKCN…KRVH), 239-261 (YKCG…QRVH), and 267-289 (YKCL…QATH). The C2H2-type 10; degenerate zinc-finger motif lies at 293-315 (FKCLEYEKSFNCSSDLIVHQRIH). The C2H2-type 11; degenerate zinc finger occupies 351–373 (YKYTVCDKSFHQSSALLQHQTVH). Ser-391 carries the post-translational modification Phosphoserine.

The protein belongs to the krueppel C2H2-type zinc-finger protein family. As to quaternary structure, interacts with POU5F1.

It is found in the cytoplasm. It localises to the nucleus. Functionally, transcriptional activator. Important for maintenance of pluripotency in embryonic stem cells. Binds directly to the POU5F1 distal enhancer and the NANOG proximal promoter, and enhances expression of both genes. Can also bind to numerous other gene promoters and regulates expression of many other pluripotency factors, either directly or indirectly. Promotes inhibition of MAPK signaling during embryonic stem cell differentiation. This is Zinc finger protein 322 (ZNF322) from Macaca fascicularis (Crab-eating macaque).